The following is a 45-amino-acid chain: DNA-directed RNA polymerase subunit Rpo12 (45 aa).

Zn(2+) contacts are provided by Cys8, Cys23, and Cys26.

Belongs to the archaeal Rpo12/eukaryotic RPC10 RNA polymerase subunit family. In terms of assembly, part of the RNA polymerase complex. The cofactor is Zn(2+).

The protein resides in the cytoplasm. The catalysed reaction is RNA(n) + a ribonucleoside 5'-triphosphate = RNA(n+1) + diphosphate. Its function is as follows. DNA-dependent RNA polymerase (RNAP) catalyzes the transcription of DNA into RNA using the four ribonucleoside triphosphates as substrates. The sequence is that of DNA-directed RNA polymerase subunit Rpo12 from Methanocella arvoryzae (strain DSM 22066 / NBRC 105507 / MRE50).